The chain runs to 509 residues: UDP-N-acetylmuramyl-tripeptide synthetase (509 aa).

124–130 serves as a coordination point for ATP; sequence GTNGKTS. UDP-N-acetyl-alpha-D-muramoyl-L-alanyl-D-glutamate contacts are provided by residues 164–165, S191, and R199; that span reads TT. At K231 the chain carries N6-carboxylysine.

The protein belongs to the MurCDEF family. MurE subfamily. Post-translationally, carboxylation is probably crucial for Mg(2+) binding and, consequently, for the gamma-phosphate positioning of ATP.

The protein resides in the cytoplasm. The protein operates within cell wall biogenesis; peptidoglycan biosynthesis. Functionally, catalyzes the addition of an amino acid to the nucleotide precursor UDP-N-acetylmuramoyl-L-alanyl-D-glutamate (UMAG) in the biosynthesis of bacterial cell-wall peptidoglycan. In Tropheryma whipplei (strain TW08/27) (Whipple's bacillus), this protein is UDP-N-acetylmuramyl-tripeptide synthetase.